Here is a 379-residue protein sequence, read N- to C-terminus: MYTFVVRDENSSVYAEVSRLLLATGHWKRLRRDNPRFNLMLGERNRLPFGRLGHEPGLMQLVNYYRGADKLCRKASLVKLIKTSPELAESCTWFPESYVIYPTNLKTPVAPAQNGIHPPIHSSRTDEREFFLTSYNKKKEDGEGNVWIAKSSAGAKGEGILISSEATELLDFIDNQGQVHVIQKYLERPLLLEPGHRKFDIRSWVLVDHQYNIYLYREGVLRTASEPYHTDNFQDKTCHLTNHCIQKEYSKNYGKYEEGNEMFFEEFNQYLTSALNITLESSILLQIKHIIRSCLLSVEPAISTRHLPYQSFQLFGFDFMVDEDLKVWLIEVNGAPACAQKLYAELCQGIVDIAIASVFPPPDAEQQQQQPPPAAFIKL.

The TTL domain occupies 3–370 (TFVVRDENSS…PPDAEQQQQQ (368 aa)).

Belongs to the tubulin--tyrosine ligase family. In terms of assembly, monomer. The cofactor is Mg(2+). K(+) serves as cofactor.

It carries out the reaction C-terminal L-alpha-aminoacyl-L-glutamyl-L-glutamyl-[tubulin] + L-tyrosine + ATP = C-terminal L-alpha-aminoacyl-L-glutamyl-L-glutamyl-L-tyrosyl-[tubulin] + ADP + phosphate + H(+). Its function is as follows. Catalyzes the post-translational addition of a tyrosine to the C-terminal end of detyrosinated alpha-tubulin. This chain is Tubulin--tyrosine ligase (TTL), found in Sus scrofa (Pig).